The sequence spans 327 residues: Diacylglycerol acyltransferase/mycolyltransferase Ag85B (327 aa).

An N-terminal signal peptide occupies residues 1–38; the sequence is MIDVSGKIRAWGRWLLVGAAATLPSLISLAGGAATASA. A substrate-binding site is contributed by 80-81; it reads LR. Positions 96–106 are fibronectin-binding; it reads FEWYYQSGLSV. A disulfide bridge connects residues C125 and C130. Substrate contacts are provided by S164 and D192. S164 (nucleophile) is an active-site residue. E268 is a catalytic residue. Residues 270 to 273, K277, and 300 to 302 contribute to the substrate site; these read FVHG and HSW. H300 is an active-site residue.

It belongs to the mycobacterial A85 antigen family.

It is found in the secreted. The enzyme catalyses 2 alpha,alpha'-trehalose 6-mycolate = alpha,alpha'-trehalose 6,6'-bismycolate + alpha,alpha-trehalose. The catalysed reaction is an acyl-CoA + a 1,2-diacyl-sn-glycerol = a triacyl-sn-glycerol + CoA. Its function is as follows. The antigen 85 proteins (FbpA, FbpB, FbpC) are responsible for the high affinity of mycobacteria for fibronectin, a large adhesive glycoprotein, which facilitates the attachment of M.tuberculosis to murine alveolar macrophages (AMs). They also help to maintain the integrity of the cell wall by catalyzing the transfer of mycolic acids to cell wall arabinogalactan and through the synthesis of alpha,alpha-trehalose dimycolate (TDM, cord factor). They catalyze the transfer of a mycoloyl residue from one molecule of alpha,alpha-trehalose monomycolate (TMM) to another TMM, leading to the formation of TDM. In Mycobacterium leprae (strain TN), this protein is Diacylglycerol acyltransferase/mycolyltransferase Ag85B (fbpB).